The sequence spans 638 residues: Exocyst complex component EXO70A1 (638 aa).

Residues F163–D190 form a disordered region.

It belongs to the EXO70 family. As to quaternary structure, the exocyst complex is composed of SEC3, SEC5, SEC6, SEC8, SEC10, EXO70A1 and EXO84B. Interacts with SEC3A and EXO84B. Co-localizes with FPP3/VETH1, FPP2/VETH2 and COG2 in vesicle-like small motile compartments. May interact with COG2.

Its subcellular location is the cytoplasm. It is found in the cytosol. The protein localises to the cytoskeleton. It localises to the phragmoplast. The protein resides in the cell membrane. Its subcellular location is the secreted. It is found in the cell wall. Its function is as follows. Component of the exocyst complex involved in the docking of exocytic vesicles with fusion sites on the plasma membrane during regulated or polarized secretion. Involved in polarized cell growth and organ morphogenesis. Involved in polarized cell growth and organ morphogenesis. During cytokinesis, involved in cell plate initiation, cell plate maturation and formation of new primary cell wall. Participates in polarized pectin delivery required for the polarized development of the mucilage-producing volcano cells of the seed coat. Involved in the recycling and localization of auxin efflux carriers PIN1 and PIN2, and thus in polar auxin transport regulation. Functions in vesicle trafficking in tracheary elements to regulate patterned secondary cell wall (SCW) thickening. The sequence is that of Exocyst complex component EXO70A1 from Arabidopsis thaliana (Mouse-ear cress).